The primary structure comprises 271 residues: GATA transcription factor 19 (271 aa).

A disordered region spans residues 1–23 (MAAEPPADGRDPPADDGAAGDGA). The Tify domain occupies 33–68 (LSAASEQLTLVYQGEVYVFDPVPPQKVQAVLLVLGG). The CCT domain maps to 95-137 (RVASLMRFREKRKERCFDKKIRYSVRKEVAQKMKRRKGQFAGR). A GATA-type zinc finger spans residues 166–193 (CQNCGISSRLTPAMRRGPAGPRSLCNAC). The interval 238 to 271 (NQTTMKTDTEMVPEQEQKADVLPPTKEEDSMATS) is disordered. A compositionally biased stretch (basic and acidic residues) spans 252-271 (QEQKADVLPPTKEEDSMATS).

This sequence belongs to the type IV zinc-finger family. Class C subfamily.

The protein resides in the nucleus. Transcriptional activator that specifically binds 5'-GATA-3' or 5'-GAT-3' motifs within gene promoters. In Oryza sativa subsp. japonica (Rice), this protein is GATA transcription factor 19.